Consider the following 74-residue polypeptide: Protein kish-B (74 aa).

Positions 1 to 22 (MTNVYSLDGILVFGLLFVCTCA) are cleaved as a signal peptide. The Extracellular portion of the chain corresponds to 23–52 (YFKKVPRLKTWLLSEKKGVWGVFYKAAVIG). The helical transmembrane segment at 53 to 73 (TRLHAAVAIACVVMAFYVLFI) threads the bilayer. Residue K74 is a topological domain, cytoplasmic.

The protein belongs to the KISH family.

The protein localises to the golgi apparatus membrane. Its function is as follows. Involved in the early part of the secretory pathway. In Homo sapiens (Human), this protein is Protein kish-B (TMEM167B).